A 296-amino-acid chain; its full sequence is Polyadenylate-binding protein 2-A (296 aa).

The disordered stretch occupies residues 1–106 (MAAVSSVASL…GELTGDQTIE (106 aa)). A compositionally biased stretch (gly residues) spans 71 to 82 (GRGGSGGGGAGG). Residues 84-97 (EELEDEELEEEEPG) are compositionally biased toward acidic residues. Residues 107–141 (DPELEAIKARVREMEEEAEKLKELQNEVEKQMNMS) are a coiled coil. The segment at 146-296 (NAGPVIMSVE…ARATSWYTPY (151 aa)) is necessary for homooligomerization. In terms of domain architecture, RRM spans 163–240 (RSIYVGNVDY…RQIKVVPKRT (78 aa)).

In terms of assembly, monomer and homooligomer. Binds RNA as a monomer and oligomerizes when bound to poly(A). In terms of tissue distribution, shows dynamic spatial expression throughout development. First expressed in the animal pole region of the egg and this pattern persists through to the blastula stage. In gastrula and neurula embryos, expressed mainly in ectodermal, neural and epidermal regions. Neural tissue-specific expression pattern persists into tailbud stage when expression is localized to the brain and spinal cord. At early tadpole stage, expression becomes gradually confined to the specific vesicle regions of the developing brain. At stage 39, expressed in the telencephalon and mesencephalon regions of the brain. Also detected in the eye and olfactory pit at the tadpole stage. Expressed during gut endoderm development. At stage 35, expressed exclusively in the anterior portion of the gut endoderm, which includes the prospective liver, stomach and pancreas. As development proceeds, expression becomes restricted to the pancreas, and by stage 46/47 (the seventh day of development) expression is localized exclusively to the pancreas. Expressed in most adult tissues.

The protein resides in the nucleus. The protein localises to the cytoplasm. Involved in the 3'-end formation of mRNA precursors (pre-mRNA) by the addition of a poly(A) tail of 200-250 nt to the upstream cleavage product. Stimulates poly(A) polymerase (PAPOLA) conferring processivity on the poly(A) tail elongation reaction and also controls the poly(A) tail length. Increases the affinity of poly(A) polymerase for RNA. Binds to poly(A) and to poly(G) with high affinity. May protect the poly(A) tail from degradation. The sequence is that of Polyadenylate-binding protein 2-A (pabpn1-a) from Xenopus laevis (African clawed frog).